The primary structure comprises 713 residues: Vacuolar amino acid transporter 4 (713 aa).

The disordered stretch occupies residues M1–Q33. Residues M1–N242 are Vacuolar-facing. Over residues H21–Q33 the composition is skewed to polar residues. Residue S88 is modified to Phosphoserine. The interval R99 to S121 is disordered. 2 positions are modified to phosphoserine: S130 and S165. A disordered region spans residues K200 to I233. The segment covering S221–Q231 has biased composition (low complexity). Residues F243–I263 traverse the membrane as a helical segment. The Cytoplasmic portion of the chain corresponds to P264 to K301. Residues V302 to F322 form a helical membrane-spanning segment. Residues H323 to G326 are Vacuolar-facing. A helical membrane pass occupies residues L327 to I347. Over L348–R373 the chain is Cytoplasmic. Residues I374–F394 form a helical membrane-spanning segment. The Vacuolar segment spans residues T395 to G410. The helical transmembrane segment at V411–I431 threads the bilayer. The Cytoplasmic portion of the chain corresponds to R432–S438. Residues L439–T459 form a helical membrane-spanning segment. At A460–R483 the chain is on the vacuolar side. The helical transmembrane segment at W484–V504 threads the bilayer. At Q505–P515 the chain is on the cytoplasmic side. The helical transmembrane segment at L516–G536 threads the bilayer. Residues Y537 to L561 lie on the Vacuolar side of the membrane. The helical transmembrane segment at I562–I582 threads the bilayer. The Cytoplasmic portion of the chain corresponds to K583–K621. Residues W622–G642 form a helical membrane-spanning segment. Residues S643–K648 lie on the Vacuolar side of the membrane. Residues F649–L669 form a helical membrane-spanning segment. Residues H670 to T692 lie on the Cytoplasmic side of the membrane. A helical membrane pass occupies residues I693–F711. Residues G712–V713 lie on the Vacuolar side of the membrane.

The protein belongs to the amino acid/polyamine transporter 2 family.

It localises to the vacuole membrane. Its function is as follows. Involved in amino acid efflux from the vacuole to the cytoplasm. Capable of transporting large neutral amino acids including tyrosine, glutamine, asparagine, isoleucine and leucine. The sequence is that of Vacuolar amino acid transporter 4 (AVT4) from Saccharomyces cerevisiae (strain ATCC 204508 / S288c) (Baker's yeast).